Consider the following 187-residue polypeptide: Protein TfaD (187 aa).

It in the C-terminal section; belongs to the tfa family.

This Escherichia coli (strain K12) protein is Protein TfaD (tfaD).